The sequence spans 327 residues: Glycerol-3-phosphate dehydrogenase [NAD(P)+] (327 aa).

NADPH is bound by residues Phe-13, Arg-34, and Lys-107. Residues Lys-107 and Gly-135 each coordinate sn-glycerol 3-phosphate. Position 139 (Ala-139) interacts with NADPH. Sn-glycerol 3-phosphate-binding residues include Lys-190, Asp-243, Ser-253, Arg-254, and Asn-255. Lys-190 acts as the Proton acceptor in catalysis. NADPH is bound at residue Arg-254. Positions 276 and 277 each coordinate NADPH.

This sequence belongs to the NAD-dependent glycerol-3-phosphate dehydrogenase family.

It localises to the cytoplasm. It catalyses the reaction sn-glycerol 3-phosphate + NAD(+) = dihydroxyacetone phosphate + NADH + H(+). The enzyme catalyses sn-glycerol 3-phosphate + NADP(+) = dihydroxyacetone phosphate + NADPH + H(+). It functions in the pathway membrane lipid metabolism; glycerophospholipid metabolism. Catalyzes the reduction of the glycolytic intermediate dihydroxyacetone phosphate (DHAP) to sn-glycerol 3-phosphate (G3P), the key precursor for phospholipid synthesis. The sequence is that of Glycerol-3-phosphate dehydrogenase [NAD(P)+] from Rhizobium johnstonii (strain DSM 114642 / LMG 32736 / 3841) (Rhizobium leguminosarum bv. viciae).